Here is a 444-residue protein sequence, read N- to C-terminus: Alpha-1,3-mannosyl-glycoprotein 2-beta-N-acetylglucosaminyltransferase (444 aa).

Residues 1 to 6 are Cytoplasmic-facing; sequence MARISC. The chain crosses the membrane as a helical; Signal-anchor for type II membrane protein span at residues 7-24; the sequence is DLRFLLIPAAFMFIYIQM. Topologically, residues 25–444 are lumenal; the sequence is RLFQTQSQYA…SVMQLGIRNS (420 aa). Residues 61 to 92 adopt a coiled-coil conformation; the sequence is KQSRIVALEDMKNRQDEELVQLKDLIQTFEKK. Substrate is bound by residues Arg115, Asp144, His188, and Asp210. A Mn(2+)-binding site is contributed by Asp211. The active-site Proton acceptor is Asp287. Ser318 is a substrate binding site. Asn351 carries an N-linked (GlcNAc...) asparagine glycan.

Belongs to the glycosyltransferase 13 family. Mn(2+) is required as a cofactor. Post-translationally, glycosylated. Expressed in roots, stems, leaves and flowers.

Its subcellular location is the golgi apparatus membrane. The enzyme catalyses N(4)-(alpha-D-Man-(1-&gt;3)-[alpha-D-Man-(1-&gt;3)-[alpha-D-Man-(1-&gt;6)]-alpha-D-Man-(1-&gt;6)]-beta-D-Man-(1-&gt;4)-beta-D-GlcNAc-(1-&gt;4)-beta-D-GlcNAc)-L-asparaginyl-[protein] (N-glucan mannose isomer 5A1,2) + UDP-N-acetyl-alpha-D-glucosamine = N(4)-{beta-D-GlcNAc-(1-&gt;2)-alpha-D-Man-(1-&gt;3)-[alpha-D-Man-(1-&gt;3)-[alpha-D-Man-(1-&gt;6)]-alpha-D-Man-(1-&gt;6)]-beta-D-Man-(1-&gt;4)-beta-D-GlcNAc-(1-&gt;4)-beta-D-GlcNAc}-L-asparaginyl-[protein] + UDP + H(+). Its pathway is protein modification; protein glycosylation. Functionally, initiates complex N-linked carbohydrate formation. Essential for the conversion of high-mannose to hybrid and complex N-glycans. Required for normal root growth and morphology. This Arabidopsis thaliana (Mouse-ear cress) protein is Alpha-1,3-mannosyl-glycoprotein 2-beta-N-acetylglucosaminyltransferase.